Reading from the N-terminus, the 490-residue chain is Cobyric acid synthase (490 aa).

A GATase cobBQ-type domain is found at 251 to 444 (GLTIAVIHLP…LHGIFANDAF (194 aa)). Residue Cys329 is the Nucleophile of the active site. Residue His436 is part of the active site.

This sequence belongs to the CobB/CobQ family. CobQ subfamily.

Its pathway is cofactor biosynthesis; adenosylcobalamin biosynthesis. Functionally, catalyzes amidations at positions B, D, E, and G on adenosylcobyrinic A,C-diamide. NH(2) groups are provided by glutamine, and one molecule of ATP is hydrogenolyzed for each amidation. This chain is Cobyric acid synthase, found in Roseiflexus castenholzii (strain DSM 13941 / HLO8).